A 380-amino-acid chain; its full sequence is O-antigen polymerase (380 aa).

12 consecutive transmembrane segments (helical) span residues 1-21 (MTYF…RLTP), 27-47 (NIVL…TFNE), 55-75 (ATTL…YILI), 94-114 (YIYW…IILL), 132-152 (SISG…MYLA), 169-189 (FLLA…VYIV), 201-221 (LIYG…LGKF), 229-249 (IISA…AAFN), 282-302 (ILPW…FAPW), 306-326 (LGLY…GIWF), 332-352 (LAVG…FFQE), and 353-373 (HYLL…LLAM).

The protein localises to the cell inner membrane. The catalysed reaction is n lipid-linked O-antigen repeat units = a lipid-linked O antigen + (n-1) polyisoprenyl diphosphate.. It functions in the pathway bacterial outer membrane biogenesis; LPS O-antigen biosynthesis. Functionally, polymerase involved in the biosynthesis of the lipopolysaccharide (LPS). Catalyzes the polymerization of the O-antigen repeat units on the periplasmic face of the inner membrane, leading to the formation of the lipid-linked O-antigen molecule. The sequence is that of O-antigen polymerase from Shigella dysenteriae.